The primary structure comprises 671 residues: Talaropentaene synthase (671 aa).

A Mg(2+)-binding site is contributed by Asp-92. A DDXXD 1 motif is present at residues 92-96 (DDMTD). Positions 223-231 (NDLYSYEKE) match the NSE/DTE motif. 3 residues coordinate isopentenyl diphosphate: Lys-389, Arg-392, and His-421. Mg(2+) contacts are provided by Asp-428 and Asp-432. The DDXXD 2 motif lies at 428–432 (DDIED). Dimethylallyl diphosphate is bound at residue Arg-437. Position 438 (Arg-438) interacts with isopentenyl diphosphate. Residues Lys-515, Thr-516, Gln-551, Asn-558, Lys-568, and Lys-578 each coordinate dimethylallyl diphosphate.

In the N-terminal section; belongs to the terpene synthase family. This sequence in the C-terminal section; belongs to the FPP/GGPP synthase family. Mg(2+) serves as cofactor.

It carries out the reaction 5 isopentenyl diphosphate + dimethylallyl diphosphate = all-trans-hexaprenyl diphosphate + 5 diphosphate. It catalyses the reaction all-trans-hexaprenyl diphosphate = talaropentaene + diphosphate. In terms of biological role, bifunctional terpene synthase that converts dimethylallyl diphosphate (DMAPP) and isopentenyl diphosphate (IPP) into talaropentaene as a single product. The C-terminal prenyltransferase (PT) domain of MpMS catalyzes formation of hexaprenyl diphosphate (HexPP), whereas the N-terminal terpene cyclase (TC) domain catalyzes the cyclization of HexPP to talaropentaene. In Talaromyces verruculosus (Penicillium verruculosum), this protein is Talaropentaene synthase.